The chain runs to 100 residues: Aspartyl/glutamyl-tRNA(Asn/Gln) amidotransferase subunit C (100 aa).

Belongs to the GatC family. Heterotrimer of A, B and C subunits.

The catalysed reaction is L-glutamyl-tRNA(Gln) + L-glutamine + ATP + H2O = L-glutaminyl-tRNA(Gln) + L-glutamate + ADP + phosphate + H(+). It carries out the reaction L-aspartyl-tRNA(Asn) + L-glutamine + ATP + H2O = L-asparaginyl-tRNA(Asn) + L-glutamate + ADP + phosphate + 2 H(+). Functionally, allows the formation of correctly charged Asn-tRNA(Asn) or Gln-tRNA(Gln) through the transamidation of misacylated Asp-tRNA(Asn) or Glu-tRNA(Gln) in organisms which lack either or both of asparaginyl-tRNA or glutaminyl-tRNA synthetases. The reaction takes place in the presence of glutamine and ATP through an activated phospho-Asp-tRNA(Asn) or phospho-Glu-tRNA(Gln). In Erythrobacter litoralis (strain HTCC2594), this protein is Aspartyl/glutamyl-tRNA(Asn/Gln) amidotransferase subunit C.